A 532-amino-acid chain; its full sequence is [Pyruvate dehydrogenase [acetyl-transferring]]-phosphatase 2, mitochondrial (532 aa).

A mitochondrion-targeting transit peptide spans 1 to 69 (MSSTVSYWIF…FALRKAYRHT (69 aa)). A PPM-type phosphatase domain is found at 107 to 518 (NSVLRFESNQ…YRDDITVMVV (412 aa)). Aspartate 144, glycine 145, aspartate 415, and aspartate 511 together coordinate Mn(2+).

The protein belongs to the PP2C family. Mg(2+) serves as cofactor.

The protein localises to the mitochondrion. It catalyses the reaction O-phospho-L-seryl-[pyruvate dehydrogenase E1 alpha subunit] + H2O = L-seryl-[pyruvate dehydrogenase E1 alpha subunit] + phosphate. Its function is as follows. Mitochondrial enzyme that catalyzes the dephosphorylation and concomitant reactivation of the alpha subunit of the E1 component of the pyruvate dehydrogenase complex (PDC), thereby stimulating the conversion of pyruvate into acetyl-CoA. Acts as a crucial regulator of T cell metabolism and function, with a particular focus on T-helper Th17. The sequence is that of [Pyruvate dehydrogenase [acetyl-transferring]]-phosphatase 2, mitochondrial (Pdp2) from Mus musculus (Mouse).